The chain runs to 151 residues: Small ribosomal subunit protein uS15 (151 aa).

Positions 1–11 (MPHRSRHKKGR) are enriched in basic residues. Residues 1 to 24 (MPHRSRHKKGRSSSVRPPHPTVPT) form a disordered region.

It belongs to the universal ribosomal protein uS15 family. Part of the 30S ribosomal subunit.

This is Small ribosomal subunit protein uS15 from Pyrobaculum calidifontis (strain DSM 21063 / JCM 11548 / VA1).